Reading from the N-terminus, the 324-residue chain is tRNA N6-adenosine threonylcarbamoyltransferase (324 aa).

Residues histidine 107, histidine 111, and tyrosine 127 each contribute to the Fe cation site. Substrate is bound by residues tyrosine 127–glycine 131, aspartate 159, glycine 172, glutamate 176, and asparagine 257. Aspartate 285 is a Fe cation binding site.

The protein belongs to the KAE1 / TsaD family. As to quaternary structure, monomer. Component of the KEOPS complex that consists of Kae1, Bud32, Cgi121 and Pcc1; the whole complex dimerizes. Fe(2+) serves as cofactor.

It localises to the cytoplasm. The catalysed reaction is L-threonylcarbamoyladenylate + adenosine(37) in tRNA = N(6)-L-threonylcarbamoyladenosine(37) in tRNA + AMP + H(+). Required for the formation of a threonylcarbamoyl group on adenosine at position 37 (t(6)A37) in tRNAs that read codons beginning with adenine. Is a component of the KEOPS complex that is probably involved in the transfer of the threonylcarbamoyl moiety of threonylcarbamoyl-AMP (TC-AMP) to the N6 group of A37. Kae1 likely plays a direct catalytic role in this reaction, but requires other protein(s) of the complex to fulfill this activity. The chain is tRNA N6-adenosine threonylcarbamoyltransferase from Thermococcus sibiricus (strain DSM 12597 / MM 739).